Reading from the N-terminus, the 534-residue chain is Cyclin-L1 (534 aa).

Cyclin-like regions lie at residues 94-196 (ELIQ…RVLK) and 209-293 (KIIV…KILQ). The segment at 327-534 (LPEGAPVLDN…DHPGHSRHRR (208 aa)) is disordered. Over residues 389 to 399 (KGRESRSRSGS) the composition is skewed to basic and acidic residues. Low complexity-rich tracts occupy residues 400–412 (RDQS…SRSA) and 437–453 (RSGS…TYKS). The segment at 400–436 (RDQSYSRSPSRSASPKHRKSESYSTSSGSKSHSRSRS) is RS. The segment covering 468–485 (SAHKARKSRSRSSSRSRS) has biased composition (basic residues). Residues 486 to 495 (RSRERSDHSG) are compositionally biased toward basic and acidic residues. Positions 496 to 511 (KYKKKSHYYRNHRHER) are enriched in basic residues. Over residues 512–528 (SRSYERASHRYDRDHPG) the composition is skewed to basic and acidic residues.

Belongs to the cyclin family. Cyclin L subfamily.

Its subcellular location is the nucleus speckle. It is found in the nucleus. The protein localises to the nucleoplasm. Involved in pre-mRNA splicing. The sequence is that of Cyclin-L1 (CCNL1) from Gallus gallus (Chicken).